A 206-amino-acid polypeptide reads, in one-letter code: Outer-membrane lipoprotein carrier protein (206 aa).

A signal peptide spans 1–20 (MRLIRMLLPVLALTTLTAHA).

This sequence belongs to the LolA family. Monomer.

It localises to the periplasm. Its function is as follows. Participates in the translocation of lipoproteins from the inner membrane to the outer membrane. Only forms a complex with a lipoprotein if the residue after the N-terminal Cys is not an aspartate (The Asp acts as a targeting signal to indicate that the lipoprotein should stay in the inner membrane). The polypeptide is Outer-membrane lipoprotein carrier protein (Pseudomonas fluorescens (strain Pf0-1)).